The sequence spans 686 residues: Chondroitin synthase (686 aa).

The segment at 130 to 417 is galactosaminyltransferase; A1 domain; it reads YVWAGKRKEL…LLQQKVPYFY (288 aa). Residues proline 157, arginine 161, aspartate 188, tyrosine 217, arginine 223, and 239–240 contribute to the UDP-N-acetyl-alpha-D-galactosamine site; that span reads DC. A Mn(2+)-binding site is contributed by aspartate 241. 361–362 is a binding site for UDP-N-acetyl-alpha-D-galactosamine; that stretch reads ED. Histidine 386 is a binding site for Mn(2+). A glucuronosyltransferase; A2 domain region spans residues 418 to 682; it reads RKKEKIESAT…ECRKYTWEKI (265 aa). Residues tyrosine 441, aspartate 469, and 517–520 each bind UDP-alpha-D-glucuronate; that span reads QLDS. Mn(2+) is bound at residue aspartate 521. UDP-alpha-D-glucuronate contacts are provided by residues histidine 581 and 603 to 604; that span reads AV. Histidine 631 provides a ligand contact to Mn(2+).

It belongs to the glycosyltransferase 2 family. CS/HAS subfamily. The cofactor is Mn(2+).

The enzyme catalyses 3-O-(beta-D-GlcA-(1-&gt;3)-beta-D-GalNAc-(1-&gt;4)-beta-D-GlcA-(1-&gt;3)-beta-D-Gal-(1-&gt;3)-beta-D-Gal-(1-&gt;4)-beta-D-Xyl)-L-seryl-[protein] + UDP-N-acetyl-alpha-D-galactosamine = 3-O-(beta-D-GalNAc-(1-&gt;4)-beta-D-GlcA-(1-&gt;3)-beta-D-GalNAc-(1-&gt;4)-beta-D-GlcA-(1-&gt;3)-beta-D-Gal-(1-&gt;3)-beta-D-Gal-(1-&gt;4)-beta-D-Xyl)-L-seryl-[protein] + UDP + H(+). It carries out the reaction 3-O-{beta-D-GlcA-(1-&gt;3)-[beta-D-GalNAc-(1-&gt;4)-beta-D-GlcA-(1-&gt;3)](n)-beta-D-GalNAc-(1-&gt;4)-beta-D-GlcA-(1-&gt;3)-beta-D-Gal-(1-&gt;3)-beta-D-Gal-(1-&gt;4)-beta-D-Xyl}-L-seryl-[protein] + UDP-N-acetyl-alpha-D-galactosamine = 3-O-{[beta-D-GalNAc-(1-&gt;4)-beta-D-GlcA-(1-&gt;3)](n+1)-beta-D-GalNAc-(1-&gt;4)-beta-D-GlcA-(1-&gt;3)-beta-D-Gal-(1-&gt;3)-beta-D-Gal-(1-&gt;4)-beta-D-Xyl}-L-seryl-[protein] + UDP + H(+). It catalyses the reaction 3-O-(beta-D-GalNAc-(1-&gt;4)-beta-D-GlcA-(1-&gt;3)-beta-D-Gal-(1-&gt;3)-beta-D-Gal-(1-&gt;4)-beta-D-Xyl)-L-seryl-[protein] + UDP-alpha-D-glucuronate = 3-O-(beta-D-GlcA-(1-&gt;3)-beta-D-GalNAc-(1-&gt;4)-beta-D-GlcA-(1-&gt;3)-beta-D-Gal-(1-&gt;3)-beta-D-Gal-(1-&gt;4)-beta-D-Xyl)-L-seryl-[protein] + UDP + H(+). The catalysed reaction is 3-O-{[beta-D-GalNAc-(1-&gt;4)-beta-D-GlcA-(1-&gt;3)](n)-beta-D-GalNAc-(1-&gt;4)-beta-D-GlcA-(1-&gt;3)-beta-D-Gal-(1-&gt;3)-beta-D-Gal-(1-&gt;4)-beta-D-Xyl}-L-seryl-[protein] + UDP-alpha-D-glucuronate = 3-O-{beta-D-GlcA-(1-&gt;3)-[beta-D-GalNAc-(1-&gt;4)-beta-D-GlcA-(1-&gt;3)](n)-beta-D-GalNAc-(1-&gt;4)-beta-D-GlcA-(1-&gt;3)-beta-D-Gal-(1-&gt;3)-beta-D-Gal-(1-&gt;4)-beta-D-Xyl}-L-seryl-[protein] + UDP + H(+). In terms of biological role, glycosyltransferase that catalyzes elongation of chondroitin, a polysaccharide composed of a repeating disaccharide of N-acetylgalactosamine (GalNAc) and glucuronic acid (GlcUA) units, by alternatively transferring the GlcUA and GalNAc moiety from UDP-GlcUA and UDP-GalNAc to the non-reducing ends of the chondroitin chain. Each chondroitin unit has the composition beta-(1-&gt;4)-GlcUA-beta-(1-&gt;3)-GalNAc. The chain is Chondroitin synthase (kfoC) from Escherichia coli.